The primary structure comprises 1303 residues: Protein STU1 (1303 aa).

Disordered stretches follow at residues arginine 239–valine 259, serine 531–serine 664, and glutamate 953–histidine 977. Polar residues predominate over residues arginine 249–valine 259. Positions serine 554–glutamine 568 are enriched in basic and acidic residues. Positions serine 573–isoleucine 583 are enriched in polar residues. The segment covering serine 596–histidine 609 has biased composition (basic and acidic residues). The segment covering serine 618–proline 629 has biased composition (polar residues). Over residues lysine 634–proline 648 the composition is skewed to basic and acidic residues. Polar residues-rich tracts occupy residues arginine 653–serine 664 and serine 955–arginine 972.

It belongs to the CLASP family. As to quaternary structure, interacts with microtubules.

It is found in the cytoplasm. The protein resides in the cytoskeleton. Its subcellular location is the nucleus. It localises to the spindle. Functionally, microtubule binding protein that promotes the stabilization of dynamic microtubules. Required for mitotic spindle formation. The polypeptide is Protein STU1 (STU1) (Candida albicans (strain SC5314 / ATCC MYA-2876) (Yeast)).